The chain runs to 792 residues: Type 2 topoisomerase subunit B (792 aa).

The 115-residue stretch at C423–P537 folds into the Toprim domain. 3 residues coordinate Mg(2+): E429, D502, and D504.

It belongs to the type II topoisomerase GyrB family. In terms of assembly, heterotetramer, composed of two GyrA and two GyrB chains. In the heterotetramer, 'GyrA' contains the active site tyrosine that forms a transient covalent intermediate with DNA, while 'GyrB' binds cofactors and catalyzes ATP hydrolysis. Requires Mg(2+) as cofactor. The cofactor is Mn(2+). It depends on Ca(2+) as a cofactor.

Its subcellular location is the cytoplasm. The enzyme catalyses ATP-dependent breakage, passage and rejoining of double-stranded DNA.. A type II topoisomerase. Despite its similarity to DNA gyrase, this enzyme is not able to supercoil DNA, and instead acts like topoisomerase IV. Relaxes both positively and negatively supercoiled DNA in an ATP-dependent fashion, decatenates interlocked circles. If this subunit is reconstituted with GyrA from E.coli the hybrid enzyme supercoils relaxed plasmid DNA; if paired with E.coli ParC supercoiling is not restored. This the first bacteria shown to not contain DNA gyrase, although it has 2 copies of a reverse gyrase that introduces positive supercoils. Type II topoisomerases break and join 2 DNA strands simultaneously in an ATP-dependent manner. This chain is Type 2 topoisomerase subunit B, found in Aquifex aeolicus (strain VF5).